The primary structure comprises 116 residues: uncharacterized protein (116 aa).

The chain crosses the membrane as a helical span at residues Leu-5–Phe-23.

It localises to the membrane. This is an uncharacterized protein from Saccharomyces cerevisiae (strain ATCC 204508 / S288c) (Baker's yeast).